The chain runs to 240 residues: 1-(5-phosphoribosyl)-5-[(5-phosphoribosylamino)methylideneamino] imidazole-4-carboxamide isomerase (240 aa).

Catalysis depends on Asp-10, which acts as the Proton acceptor. Asp-131 (proton donor) is an active-site residue.

The protein belongs to the HisA/HisF family.

The protein resides in the cytoplasm. The enzyme catalyses 1-(5-phospho-beta-D-ribosyl)-5-[(5-phospho-beta-D-ribosylamino)methylideneamino]imidazole-4-carboxamide = 5-[(5-phospho-1-deoxy-D-ribulos-1-ylimino)methylamino]-1-(5-phospho-beta-D-ribosyl)imidazole-4-carboxamide. It participates in amino-acid biosynthesis; L-histidine biosynthesis; L-histidine from 5-phospho-alpha-D-ribose 1-diphosphate: step 4/9. In Shouchella clausii (strain KSM-K16) (Alkalihalobacillus clausii), this protein is 1-(5-phosphoribosyl)-5-[(5-phosphoribosylamino)methylideneamino] imidazole-4-carboxamide isomerase.